The following is a 78-amino-acid chain: Large ribosomal subunit protein eL20 (78 aa).

It belongs to the eukaryotic ribosomal protein eL20 family. Part of the 50S ribosomal subunit. Binds 23S rRNA.

The sequence is that of Large ribosomal subunit protein eL20 from Pyrobaculum arsenaticum (strain DSM 13514 / JCM 11321 / PZ6).